The following is a 148-amino-acid chain: Fluoride-specific ion channel FluC 2 (148 aa).

The next 4 membrane-spanning stretches (helical) occupy residues 23-43 (LGHL…RLAV), 61-81 (GTLA…TLIF), 92-112 (FWVL…LHTL), and 120-140 (LLGG…ALAG). Residues Gly99 and Thr102 each coordinate Na(+).

It belongs to the fluoride channel Fluc/FEX (TC 1.A.43) family.

It localises to the cell membrane. It carries out the reaction fluoride(in) = fluoride(out). With respect to regulation, na(+) is not transported, but it plays an essential structural role and its presence is essential for fluoride channel function. Fluoride-specific ion channel. Important for reducing fluoride concentration in the cell, thus reducing its toxicity. The chain is Fluoride-specific ion channel FluC 2 from Rubrobacter xylanophilus (strain DSM 9941 / JCM 11954 / NBRC 16129 / PRD-1).